We begin with the raw amino-acid sequence, 183 residues long: UPF0316 protein BcerKBAB4_3093 (183 aa).

A run of 3 helical transmembrane segments spans residues 6–26, 32–52, and 58–78; these read LIFV…ILLV, SAAG…GIVF, and WMNI…GGYI.

Belongs to the UPF0316 family.

It is found in the cell membrane. This chain is UPF0316 protein BcerKBAB4_3093, found in Bacillus mycoides (strain KBAB4) (Bacillus weihenstephanensis).